The chain runs to 347 residues: Biotin synthase (347 aa).

The 219-residue stretch at 40-258 folds into the Radical SAM core domain; sequence AQVQVSTLLS…IAVARIVMPR (219 aa). Residues cysteine 55, cysteine 59, and cysteine 62 each contribute to the [4Fe-4S] cluster site. [2Fe-2S] cluster is bound by residues cysteine 99, cysteine 130, cysteine 190, and arginine 262.

Belongs to the radical SAM superfamily. Biotin synthase family. As to quaternary structure, homodimer. [4Fe-4S] cluster is required as a cofactor. The cofactor is [2Fe-2S] cluster.

It carries out the reaction (4R,5S)-dethiobiotin + (sulfur carrier)-SH + 2 reduced [2Fe-2S]-[ferredoxin] + 2 S-adenosyl-L-methionine = (sulfur carrier)-H + biotin + 2 5'-deoxyadenosine + 2 L-methionine + 2 oxidized [2Fe-2S]-[ferredoxin]. It participates in cofactor biosynthesis; biotin biosynthesis; biotin from 7,8-diaminononanoate: step 2/2. Functionally, catalyzes the conversion of dethiobiotin (DTB) to biotin by the insertion of a sulfur atom into dethiobiotin via a radical-based mechanism. The chain is Biotin synthase from Stenotrophomonas maltophilia (strain R551-3).